A 416-amino-acid chain; its full sequence is UDP-N-acetylglucosamine 1-carboxyvinyltransferase (416 aa).

22-23 serves as a coordination point for phosphoenolpyruvate; that stretch reads KN. R92 is a binding site for UDP-N-acetyl-alpha-D-glucosamine. Residue C116 is the Proton donor of the active site. A 2-(S-cysteinyl)pyruvic acid O-phosphothioketal modification is found at C116. UDP-N-acetyl-alpha-D-glucosamine contacts are provided by D306 and I328.

Belongs to the EPSP synthase family. MurA subfamily.

The protein resides in the cytoplasm. The enzyme catalyses phosphoenolpyruvate + UDP-N-acetyl-alpha-D-glucosamine = UDP-N-acetyl-3-O-(1-carboxyvinyl)-alpha-D-glucosamine + phosphate. Its pathway is cell wall biogenesis; peptidoglycan biosynthesis. Cell wall formation. Adds enolpyruvyl to UDP-N-acetylglucosamine. This Buchnera aphidicola subsp. Baizongia pistaciae (strain Bp) protein is UDP-N-acetylglucosamine 1-carboxyvinyltransferase.